The following is an 860-amino-acid chain: MEVDADLELLTSLLEENEAAERNGVVSHEASSELDEFDELFDGDEDGSYHGSDNGTEEQTIGGVEEDFTTLFGDIDDIKEEEAAASDTKKQSSSVCQEKSKDELEDELRKMQAQMKKLQEQLQKTALAKTSSPGNPKKSPENKMVQSGKTSRTSPLIERKKTDSNTVAPQLTSPTVPKAKLPDAPKRKQNLSDKSPVQKKMASFLSPPEKSSARPGQSTATQPITNTLKSPVGQQYHVEKFSGLRIRKPRVSSSEMERKMNGRKLIRLAQLQNKIATEKLEEEDWVTFGVIVKKITPQSSNNGKTFSIWRLNDLKDLDKYISLFLFGDVHKEHWKTDQGTVIGLLNANPMKPKEGTDEVCLSVDNPQKVLLMGDAVDLGTCKARKKNGDPCTQMVNLNDCEYCQYHVQAQYKKVSSKRADLQSSYSGHVPKKMARGANGLRERLCQGGFHYGGVSSMAYAATLGSTTAPKKTVQSTLSNMVVRGAEAIALEARQKIAAAKNVVQTDEFKELMTLPTPGALNLKKHLSGVSPQANCGKEGQPIQSISASTLLKQQKQQMLNARKKRAEESQKRFLESTEKSEKSSTLTSSACSVFQSPKQGAEFPNAQKMATPKLGRGFAEGDDVLFFDISPPPAPKLSTSAEAKKLLAIQKLQAKGQTLAKTDPNSIKRKRGSSSEELVAQRVASHASTSPKSPDENEPAIKKHRDQLAYLESEEFQKILNAKSKHTGILKEAEVEIQEHYFDPLVKKEQLEEKMQSIREQSCRVVTCKTCKYTHFKPKETCVSENHDFHWHNGVKRFFKCPCGNRTISLDRLPKKHCSTCGLFKWERVGMLKEKTGPKLGGETLLPRGEEHGKFLNSLK.

The interval Met1–Val145 is N-terminal domain. Positions Glu18–Thr225 are disordered. Acidic residues-rich tracts occupy residues Ser32–Asp46 and Val64–Ala84. Residues Ser93 to Ser131 adopt a coiled-coil conformation. A compositionally biased stretch (basic and acidic residues) spans Glu98–Lys110. Composition is skewed to polar residues over residues Glu120 to Gly134, Met144 to Ser154, Ser164 to Thr175, and Arg214 to Thr225. An OB-fold domain region spans residues Ser230–Thr380. Positions Cys381–His406 are zinc finger-like 1. Disordered regions lie at residues Gln553–Cys591 and Gln657–Ala700. The span at Arg565–Lys582 shows a compositional bias: basic and acidic residues. Residues Ser596–Lys860 are C-terminal domain. 2 zinc finger-like regions span residues Cys768–His787 and Cys801–Cys821.

This sequence belongs to the MCM10 family. In terms of assembly, self-associates.

It is found in the nucleus. Functionally, acts as a replication initiation factor that brings together the MCM2-7 helicase and the DNA polymerase alpha/primase complex in order to initiate DNA replication. Additionally, plays a role in preventing DNA damage during replication. The polypeptide is Protein MCM10 homolog (mcm10) (Xenopus laevis (African clawed frog)).